The following is a 310-amino-acid chain: Ribosomal RNA small subunit methyltransferase H (310 aa).

Residues 32-34, Asp52, Phe79, Asp100, and Gln107 contribute to the S-adenosyl-L-methionine site; that span reads GGH.

This sequence belongs to the methyltransferase superfamily. RsmH family.

The protein localises to the cytoplasm. It carries out the reaction cytidine(1402) in 16S rRNA + S-adenosyl-L-methionine = N(4)-methylcytidine(1402) in 16S rRNA + S-adenosyl-L-homocysteine + H(+). In terms of biological role, specifically methylates the N4 position of cytidine in position 1402 (C1402) of 16S rRNA. The polypeptide is Ribosomal RNA small subunit methyltransferase H (Bacillus thuringiensis subsp. konkukian (strain 97-27)).